A 167-amino-acid chain; its full sequence is Small ribosomal subunit protein uS3m (167 aa).

Residues 1 to 35 constitute a mitochondrion transit peptide; it reads MAWSASVRGLGQRVLACSRELPGAWRTLHTSAVCA.

Belongs to the universal ribosomal protein uS3 family. In terms of assembly, component of the mitochondrial ribosome small subunit (28S) which comprises a 12S rRNA and about 30 distinct proteins.

The protein resides in the mitochondrion. This chain is Small ribosomal subunit protein uS3m (Mrps24), found in Mus musculus (Mouse).